The following is a 167-amino-acid chain: Large ribosomal subunit protein uL10 (167 aa).

It belongs to the universal ribosomal protein uL10 family. As to quaternary structure, part of the ribosomal stalk of the 50S ribosomal subunit. The N-terminus interacts with L11 and the large rRNA to form the base of the stalk. The C-terminus forms an elongated spine to which L12 dimers bind in a sequential fashion forming a multimeric L10(L12)X complex.

Forms part of the ribosomal stalk, playing a central role in the interaction of the ribosome with GTP-bound translation factors. The sequence is that of Large ribosomal subunit protein uL10 from Chromohalobacter salexigens (strain ATCC BAA-138 / DSM 3043 / CIP 106854 / NCIMB 13768 / 1H11).